A 208-amino-acid chain; its full sequence is Histone H1.3 (208 aa).

Residue S2 is modified to N-acetylserine. In terms of domain architecture, H15 spans 37-113; it reads AHPPYINMVT…GASGRFRVTE (77 aa). A disordered region spans residues 113–208; sequence EKKAAAAKKP…PAKKAVAPKT (96 aa). 2 stretches are compositionally biased toward basic residues: residues 148–158 and 165–191; these read KAKKTTATKTK and KKVK…KSAP. Residues 192 to 208 show a composition bias toward low complexity; the sequence is KKAAAAKPAKKAVAPKT.

This sequence belongs to the histone H1/H5 family.

Its subcellular location is the nucleus. It localises to the chromosome. Functionally, histones H1 are necessary for the condensation of nucleosome chains into higher-order structures. This is Histone H1.3 (hil-3) from Caenorhabditis elegans.